The primary structure comprises 168 residues: MPLLDSFKVDHTKMQAPAVRIAKTMTTPKGDLITVFDLRFCVPNKEIMSPKGIHTLEHLFAGFMRAHLNSDEVEIIDISPMGCRTGFYMSLIGAPSERRVADAWLAAMHDILNVQDQSKIPELNIYQCGTYTEHSLSDAHATAQHVITRGIGINKNEELLLDESLLTE.

Residues His-54, His-58, and Cys-128 each coordinate Fe cation.

It belongs to the LuxS family. As to quaternary structure, homodimer. Requires Fe cation as cofactor.

It catalyses the reaction S-(5-deoxy-D-ribos-5-yl)-L-homocysteine = (S)-4,5-dihydroxypentane-2,3-dione + L-homocysteine. Functionally, involved in the synthesis of autoinducer 2 (AI-2) which is secreted by bacteria and is used to communicate both the cell density and the metabolic potential of the environment. The regulation of gene expression in response to changes in cell density is called quorum sensing. Catalyzes the transformation of S-ribosylhomocysteine (RHC) to homocysteine (HC) and 4,5-dihydroxy-2,3-pentadione (DPD). The polypeptide is S-ribosylhomocysteine lyase (Actinobacillus succinogenes (strain ATCC 55618 / DSM 22257 / CCUG 43843 / 130Z)).